The sequence spans 134 residues: Large ribosomal subunit protein uL16c (134 aa).

It belongs to the universal ribosomal protein uL16 family. In terms of assembly, part of the 50S ribosomal subunit.

It localises to the plastid. It is found in the chloroplast. This chain is Large ribosomal subunit protein uL16c, found in Pinus thunbergii (Japanese black pine).